Here is a 247-residue protein sequence, read N- to C-terminus: ATP synthase subunit a, chloroplastic (247 aa).

The next 5 membrane-spanning stretches (helical) occupy residues 36–56 (GQVLMTSWFVFAVIAILSIAG), 95–115 (IPFLGTLFLFIFVSNWSGALI), 134–154 (INTTVALALLTSTAYFYAGFS), 199–219 (LVVGVLVALVPLVVPIPIMLL), and 220–240 (GLFTSGIQALVFATLAGAYIG).

This sequence belongs to the ATPase A chain family. In terms of assembly, F-type ATPases have 2 components, CF(1) - the catalytic core - and CF(0) - the membrane proton channel. CF(1) has five subunits: alpha(3), beta(3), gamma(1), delta(1), epsilon(1). CF(0) has four main subunits: a, b, b' and c.

Its subcellular location is the plastid. The protein localises to the chloroplast thylakoid membrane. Functionally, key component of the proton channel; it plays a direct role in the translocation of protons across the membrane. This Tupiella akineta (Green alga) protein is ATP synthase subunit a, chloroplastic.